The primary structure comprises 438 residues: Proline--tRNA ligase (438 aa).

It belongs to the class-II aminoacyl-tRNA synthetase family. ProS type 2 subfamily. In terms of assembly, homodimer.

The protein resides in the cytoplasm. The enzyme catalyses tRNA(Pro) + L-proline + ATP = L-prolyl-tRNA(Pro) + AMP + diphosphate. In terms of biological role, catalyzes the attachment of proline to tRNA(Pro) in a two-step reaction: proline is first activated by ATP to form Pro-AMP and then transferred to the acceptor end of tRNA(Pro). The protein is Proline--tRNA ligase of Gluconobacter oxydans (strain 621H) (Gluconobacter suboxydans).